The chain runs to 541 residues: Forkhead box protein O (541 aa).

The span at 118–150 (NEQCGQLGGASSNGSTAMLHTPDGSNSHQTSFP) shows a compositional bias: polar residues. 2 disordered regions span residues 118-168 (NEQC…GKKT) and 252-291 (WVINPDAKPGRNPRRTRERSNTIETTTKAQLEKSRRGAKK). Positions 175–268 (WGNMSYAELI…KPGRNPRRTR (94 aa)) form a DNA-binding region, fork-head. T273 bears the Phosphothreonine mark. S319 carries the post-translational modification Phosphoserine; by CaMK2.

In terms of assembly, interacts with rle-1. Interacts with unc-43 and tax-6. Interacts with jnk-1. Interacts with ftt-2. Interacts with prmt-1. Interacts with hcf-1. In terms of processing, phosphorylated by akt-1 and/or akt-2. Phosphorylated by sgk-1. Phosphorylated by unc-43. Phosphorylated by jnk-1. Dephosphorylated by tax-6 in vitro. Post-translationally, ubiquitinated. Ubiquitination by rle-1 leads to proteasome-mediated degradation. Methylation by prmt-1 prevents phosphorylation and promotes translocation to the nucleus to allow for daf-16-dependent transcription. As to expression, isoform b and isoform c are expressed in ectoderm, muscles, intestine and neurons. Isoform b is also expressed in the pharynx. The intestine appears to be the primary site of longevity function.

Its subcellular location is the nucleus. The protein localises to the cytoplasm. Its function is as follows. Forkhead-type transcription factor. Binds to the promoters of genes that contain the daf-16/FOXO binding element (DBE), TTGTTTAC, in their regulatory region. Functions in the Insulin/IGF-1-like signaling (IIS) mediated pathway which affects lipogenesis, lifespan, starvation survival, heat shock and oxidative stress responses, sleep, associative memory, and dauer formation. Longevity signaling predominantly arises from expression in the intestine. Acts in the intestine to mediate the role of slo-1 in age-associated decline in motor activity and longevity. Transcriptional activity of daf-16/FOXO is negatively regulated by interaction with host cell factor homolog hcf-1; and by cytoplasmic sequestration by association with ftt-2. Inhibition is required for the carbon dioxide (CO2) avoidance response. Upon loss of inhibition, daf-16 translocates to the nucleus to regulate genes that result in delayed reproduction and growth while increasing stress resistance starvation tolerance and longevity. Association with arginine methyltransferase prmt-1 prevents phosphorylation and allows for translocation to the nucleus and the subsequent transcription of longevity-related genes. Modulation of its activity by cGMP levels in sensory neurons regulates lifespan. Has a protective role against muscle dystrophy. Involved in mediating protection against aberrant protein aggregation proteotoxicity. Influences transcription of genes that code for proteins involved in immunity as part of a general stress response. Targets genes that inhibit and stimulate tumor growth. Targets kinases, phosphatases and transcription factors that are primarily involved in signaling and gene regulation. Thought to regulate ins-7 in FOXO-to-FOXO signaling, which coordinates daf-16 expression. Activity is positively regulated by shc-1-mediated inhibition of daf-2 and activation of JNK pathway. Through the regulation of its activity by shc-1-mediated inhibition of daf-2 and activation of JNK pathway, plays a role in maintaining the integrity of the gonad. Functions by indirect interaction with jnk-1 of the mitogen-activated protein kinase (MAPK) pathway. Involved in increased proteasome activity by activating expression of rpn-6.1 in response to proteotoxic stress, leading to enhanced assembly of the 26S proteasome, followed by higher proteasome activity. Also regulates proteasome activity in the intestine by preventing expression of deubiquitinase ubh-4. Represses transcription of natc-1. Involved in regulation of srh-234 expression. Binds to the promoter of the AMPK-gamma regulatory subunit, aakg-4, and activates its transcription. Also activates transcription of AMPK-gamma regulatory subunit, aakg-1. Maintains endoplasmic reticulum (ER) function by inducing protein degradation and elimination to remove misfolded secretory proteins from the ER independently of the ire-1/xbp-1 unfolded protein response pathway. Regulates epidermal innate immunity to nematophagous fungal infection and physical wounding which trigger bli-3 induced ROS release, leading to daf-16 activation independently of daf-2 signaling. May negatively regulate resistance to stress caused by oxidized cholesterol adducts by preventing the activation of daf-9 and nuclear hormone receptor daf-12, two members of the steroid signaling pathway. Promotes apoptosis during embryonic development. Probably through the regulation of the autophagy genes atg-18 and atg-16.2, plays a role in regulating stem cell number in the germline during larval development. Plays a role in learning and memory; including associative memory, and aversive gustatory associated learning known as salt avoidance learning. Plays a role in regulating gene transcription in response to white light exposure. Binds to the promoter of dex-1 to positively regulate its expression in seam cells during the dauer phase. Plays a role in transgenerational lipid accumulation in response to a high-fat diet. In terms of biological role, functions in the Insulin/IGF-1-like signaling (IIS) mediated pathway. May play a role in lifespan modulation, but less significant than that played by isoforms d and f. Functions in the Insulin/IGF-1-like signaling (IIS) mediated pathway. Transcript level in the early adult may play a role in lifespan modulation, but effect is more significant than that played by isoform a. The sequence is that of Forkhead box protein O from Caenorhabditis elegans.